The chain runs to 877 residues: SRP-independent targeting protein 1 (877 aa).

Phosphoserine is present on residues serine 309, serine 310, serine 311, serine 332, and serine 334. Disordered stretches follow at residues 369–414 (LRKQ…PSND), 446–521 (DDYT…DVLS), and 550–579 (KPFNQKFPNSQQPDSAGASSPKRSTSSNHF). The segment covering 389–402 (RSQSYSSSNMSRSP) has biased composition (low complexity). Residues 412–441 (SNDELVYDELNNQINEVQDRAKNEEIVLYN) are a coiled coil. The segment covering 447–462 (DYTKERGEQEQDRTSY) has biased composition (basic and acidic residues). A compositionally biased stretch (acidic residues) spans 470-501 (YDDEEGGNEDNYDDDEDDDDDDDDDDESDDEG). Composition is skewed to polar residues over residues 510–521 (LSRSGSSTDVLS) and 551–579 (PFNQKFPNSQQPDSAGASSPKRSTSSNHF). Residues lysine 668 and lysine 670 each participate in a glycyl lysine isopeptide (Lys-Gly) (interchain with G-Cter in ubiquitin) cross-link. Phosphoserine is present on residues serine 692, serine 694, and serine 706. The tract at residues 773–815 (SLPKEREDDNDSTNSTIVPNHPDNDNYNDNDNDNNTGINSNNF) is disordered. The segment covering 805–815 (DNNTGINSNNF) has biased composition (low complexity). Serine 841 carries the post-translational modification Phosphoserine.

As to quaternary structure, interacts with ENV10/SND2.

The protein localises to the cytoplasm. In terms of biological role, functions in the SND pathway, a SRP (signal recognition particle) and GET (guided entry of tail-anchored proteins) independent pathway for targeting a broad range of substrate proteins to the endoplasmic reticulum. SND functions in parallel to GET in targeting proteins with downstream hydrophobic motifs. The chain is SRP-independent targeting protein 1 from Saccharomyces cerevisiae (strain ATCC 204508 / S288c) (Baker's yeast).